We begin with the raw amino-acid sequence, 179 residues long: Cell division protein SepF (179 aa).

The interval 22–55 (LPYEKRDEPVFTSVNSSQEPALPMNQPSQSAGTK) is disordered. The span at 33-55 (TSVNSSQEPALPMNQPSQSAGTK) shows a compositional bias: polar residues.

This sequence belongs to the SepF family. In terms of assembly, homodimer. Interacts with FtsZ.

It is found in the cytoplasm. Functionally, cell division protein that is part of the divisome complex and is recruited early to the Z-ring. Probably stimulates Z-ring formation, perhaps through the cross-linking of FtsZ protofilaments. Its function overlaps with FtsA. The protein is Cell division protein SepF of Streptococcus pneumoniae (strain Taiwan19F-14).